The sequence spans 316 residues: 4-hydroxy-3-methylbut-2-enyl diphosphate reductase (316 aa).

A [4Fe-4S] cluster-binding site is contributed by Cys12. Residues His41 and His74 each coordinate (2E)-4-hydroxy-3-methylbut-2-enyl diphosphate. The dimethylallyl diphosphate site is built by His41 and His74. The isopentenyl diphosphate site is built by His41 and His74. Cys96 contacts [4Fe-4S] cluster. Residue His124 coordinates (2E)-4-hydroxy-3-methylbut-2-enyl diphosphate. His124 is a binding site for dimethylallyl diphosphate. Isopentenyl diphosphate is bound at residue His124. Glu126 acts as the Proton donor in catalysis. Thr165 contributes to the (2E)-4-hydroxy-3-methylbut-2-enyl diphosphate binding site. Cys195 is a binding site for [4Fe-4S] cluster. 4 residues coordinate (2E)-4-hydroxy-3-methylbut-2-enyl diphosphate: Ser223, Ser224, Asn225, and Ser267. Dimethylallyl diphosphate is bound by residues Ser223, Ser224, Asn225, and Ser267. The isopentenyl diphosphate site is built by Ser223, Ser224, Asn225, and Ser267.

This sequence belongs to the IspH family. Requires [4Fe-4S] cluster as cofactor.

The catalysed reaction is isopentenyl diphosphate + 2 oxidized [2Fe-2S]-[ferredoxin] + H2O = (2E)-4-hydroxy-3-methylbut-2-enyl diphosphate + 2 reduced [2Fe-2S]-[ferredoxin] + 2 H(+). The enzyme catalyses dimethylallyl diphosphate + 2 oxidized [2Fe-2S]-[ferredoxin] + H2O = (2E)-4-hydroxy-3-methylbut-2-enyl diphosphate + 2 reduced [2Fe-2S]-[ferredoxin] + 2 H(+). The protein operates within isoprenoid biosynthesis; dimethylallyl diphosphate biosynthesis; dimethylallyl diphosphate from (2E)-4-hydroxy-3-methylbutenyl diphosphate: step 1/1. It participates in isoprenoid biosynthesis; isopentenyl diphosphate biosynthesis via DXP pathway; isopentenyl diphosphate from 1-deoxy-D-xylulose 5-phosphate: step 6/6. Its function is as follows. Catalyzes the conversion of 1-hydroxy-2-methyl-2-(E)-butenyl 4-diphosphate (HMBPP) into a mixture of isopentenyl diphosphate (IPP) and dimethylallyl diphosphate (DMAPP). Acts in the terminal step of the DOXP/MEP pathway for isoprenoid precursor biosynthesis. The sequence is that of 4-hydroxy-3-methylbut-2-enyl diphosphate reductase from Acidithiobacillus ferrooxidans (strain ATCC 53993 / BNL-5-31) (Leptospirillum ferrooxidans (ATCC 53993)).